The sequence spans 462 residues: L-seryl-tRNA(Sec) selenium transferase (462 aa).

Lysine 293 is subject to N6-(pyridoxal phosphate)lysine.

Belongs to the SelA family. Pyridoxal 5'-phosphate serves as cofactor.

It is found in the cytoplasm. It carries out the reaction L-seryl-tRNA(Sec) + selenophosphate + H(+) = L-selenocysteinyl-tRNA(Sec) + phosphate. It functions in the pathway aminoacyl-tRNA biosynthesis; selenocysteinyl-tRNA(Sec) biosynthesis; selenocysteinyl-tRNA(Sec) from L-seryl-tRNA(Sec) (bacterial route): step 1/1. In terms of biological role, converts seryl-tRNA(Sec) to selenocysteinyl-tRNA(Sec) required for selenoprotein biosynthesis. The polypeptide is L-seryl-tRNA(Sec) selenium transferase (Clostridium botulinum (strain Langeland / NCTC 10281 / Type F)).